A 912-amino-acid chain; its full sequence is Metabotropic glutamate receptor 4 (912 aa).

Residues 1-32 form the signal peptide; it reads MSGKGGWAWWWARLPLCLLLSLYAPWVPSSLG. Residues 33-587 lie on the Extracellular side of the membrane; it reads KPKGHPHMNS…IVKLEWDSPW (555 aa). Residues Cys67 and Cys109 are joined by a disulfide bond. An N-linked (GlcNAc...) asparagine glycan is attached at Asn98. L-glutamate contacts are provided by residues Ser159, 180 to 182, and Tyr230; that span reads AST. 7 disulfide bridges follow: Cys249–Cys538, Cys372–Cys388, Cys428–Cys435, Cys520–Cys539, Cys524–Cys542, Cys545–Cys557, and Cys560–Cys573. Asn301 is a glycosylation site (N-linked (GlcNAc...) asparagine). Asp312 provides a ligand contact to L-glutamate. Lys405 contributes to the L-glutamate binding site. Residues Asn454 and Asn484 are each glycosylated (N-linked (GlcNAc...) asparagine). N-linked (GlcNAc...) asparagine glycosylation occurs at Asn569. A helical membrane pass occupies residues 588–610; it reads AVLPLFLAVVGIAATLFVVVTFV. At 611–624 the chain is on the cytoplasmic side; the sequence is RYNDTPIVKASGRE. A helical transmembrane segment spans residues 625–645; sequence LSYVLLAGIFLCYATTFLMIA. Residues 646–656 lie on the Extracellular side of the membrane; it reads EPDLGTCSLRR. The helical transmembrane segment at 657-675 threads the bilayer; it reads IFLGLGMSISYAALLTKTN. Over 676-699 the chain is Cytoplasmic; it reads RIYRIFEQGKRSVSAPRFISPASQ. A helical transmembrane segment spans residues 700 to 720; it reads LAITFILISLQLLGICVWFVV. The Extracellular portion of the chain corresponds to 721–750; it reads DPSHSVVDFQDQRTLDPRFARGVLKCDISD. The helical transmembrane segment at 751–772 threads the bilayer; the sequence is LSLICLLGYSMLLMVTCTVYAI. Topologically, residues 773–785 are cytoplasmic; sequence KTRGVPETFNEAK. A helical membrane pass occupies residues 786 to 808; that stretch reads PIGFTMYTTCIVWLAFIPIFFGT. The Extracellular segment spans residues 809-821; that stretch reads SQSADKLYIQTTT. Residues 822-847 traverse the membrane as a helical segment; it reads LTVSVSLSASVSLGMLYMPKVYIILF. Over 848-912 the chain is Cytoplasmic; it reads HPEQNVPKRK…TYVTYTNHAI (65 aa).

It belongs to the G-protein coupled receptor 3 family. In terms of assembly, interacts with PICK1. In terms of tissue distribution, is widely distributed in the CNS. Predominant expression is seen in the granule cells of the cerebellum.

Its subcellular location is the cell membrane. In terms of biological role, G-protein coupled receptor for glutamate. Ligand binding causes a conformation change that triggers signaling via guanine nucleotide-binding proteins (G proteins) and modulates the activity of down-stream effectors. Signaling inhibits adenylate cyclase activity. The polypeptide is Metabotropic glutamate receptor 4 (Grm4) (Rattus norvegicus (Rat)).